The primary structure comprises 245 residues: 1-(5-phosphoribosyl)-5-[(5-phosphoribosylamino)methylideneamino] imidazole-4-carboxamide isomerase (245 aa).

The Proton acceptor role is filled by Asp10. Residue Asp135 is the Proton donor of the active site.

This sequence belongs to the HisA/HisF family.

It localises to the cytoplasm. It catalyses the reaction 1-(5-phospho-beta-D-ribosyl)-5-[(5-phospho-beta-D-ribosylamino)methylideneamino]imidazole-4-carboxamide = 5-[(5-phospho-1-deoxy-D-ribulos-1-ylimino)methylamino]-1-(5-phospho-beta-D-ribosyl)imidazole-4-carboxamide. It functions in the pathway amino-acid biosynthesis; L-histidine biosynthesis; L-histidine from 5-phospho-alpha-D-ribose 1-diphosphate: step 4/9. This is 1-(5-phosphoribosyl)-5-[(5-phosphoribosylamino)methylideneamino] imidazole-4-carboxamide isomerase from Methanosarcina acetivorans (strain ATCC 35395 / DSM 2834 / JCM 12185 / C2A).